Here is a 144-residue protein sequence, read N- to C-terminus: Deoxyuridine 5'-triphosphate nucleotidohydrolase (144 aa).

DUMP contacts are provided by Ser-66, Arg-133, Phe-138, and Gly-139.

Belongs to the dUTPase family. Homotrimer. Requires Mg(2+) as cofactor.

It carries out the reaction dUTP + H2O = dUMP + diphosphate + H(+). The protein operates within pyrimidine metabolism; dUMP biosynthesis; dUMP from dCTP (dUTP route): step 2/2. In terms of biological role, involved in nucleotide metabolism via production of dUMP, the immediate precursor of thymidine nucleotides, and decreases the intracellular concentration of dUTP so that uracil cannot be incorporated into DNA. The chain is Deoxyuridine 5'-triphosphate nucleotidohydrolase (DUT1) from Encephalitozoon cuniculi (strain GB-M1) (Microsporidian parasite).